Consider the following 633-residue polypeptide: Extracellular metalloproteinase 5 (633 aa).

An N-terminal signal peptide occupies residues 1–21 (MHGLLLAAAGLLSLPLHVIAH). Positions 22 to 245 (PQPSTNLAGR…HNVVDYVSHA (224 aa)) are excised as a propeptide. A glycan (N-linked (GlcNAc...) asparagine) is linked at Asn-286. Residue His-428 coordinates Zn(2+). Glu-429 is an active-site residue. Zn(2+) is bound at residue His-432. N-linked (GlcNAc...) asparagine glycosylation is found at Asn-592 and Asn-621.

The protein belongs to the peptidase M36 family. Requires Zn(2+) as cofactor.

The protein localises to the secreted. Its function is as follows. Secreted metalloproteinase probably acting as a virulence factor. In Arthroderma benhamiae (Trichophyton mentagrophytes), this protein is Extracellular metalloproteinase 5 (MEP5).